The sequence spans 284 residues: Tropomyosin (284 aa).

Positions 1–47 are disordered; the sequence is MDAIKKKMQAMKIEKDNAMDRADAAEEKARQQQERVEKLEEELRDTQ. Residues 1–284 adopt a coiled-coil conformation; the sequence is MDAIKKKMQA…DQTFQELSGY (284 aa). A compositionally biased stretch (basic and acidic residues) spans 12 to 38; sequence KIEKDNAMDRADAAEEKARQQQERVEK.

This sequence belongs to the tropomyosin family.

Tropomyosin, in association with the troponin complex, plays a central role in the calcium dependent regulation of muscle contraction. The chain is Tropomyosin from Trichinella spiralis (Trichina worm).